The following is a 393-amino-acid chain: Staphopain B (393 aa).

The N-terminal stretch at 1–36 is a signal peptide; sequence MNSSCKTRVFNIISIIMVSMLILSLGAFANNNKAKA. The propeptide occupies 37 to 219; the sequence is DSHSKQLEIN…KVEENEAIQE (183 aa). Active-site residues include Cys243, His340, and Asn360.

It belongs to the peptidase C47 family. As to quaternary structure, in the cytoplasm, prematurely activated/folded SspB forms a stable non-covalent complex with SspC. In terms of processing, proteolytically cleaved by staphylococcal serine protease (SspA).

The protein resides in the secreted. Prematurely activated/folded staphopain B is inhibited by staphostatin B (SspC), which is probably required to protect staphylococcal cytoplasmic proteins from degradation by SspB. Cysteine protease that plays an important role in the inhibition of host innate immune response. Degrades host elastin, fibrogen, fibronectin and kininogen. Blocks phagocytosis of opsonised S.aureus by neutrophils and monocytes by inducing their death in a proteolytic activity-dependent manner. Decreases surface expression of the 'don't eat me' signal CD31 on neutrophils. Cleaves host galectin-3/LGALS3, thereby inhibiting the neutrophil-activating ability of the lectin. This Staphylococcus aureus (strain MRSA252) protein is Staphopain B (sspB).